The primary structure comprises 272 residues: Tumor necrosis factor receptor superfamily member 4 (272 aa).

The first 19 residues, 1–19, serve as a signal peptide directing secretion; the sequence is MYVWVQQPTALLLLALTLG. Topologically, residues 20–211 are extracellular; that stretch reads VTARRLNCVK…PPTLVTPEGP (192 aa). TNFR-Cys repeat units lie at residues 26–61 and 62–103; these read NCVK…TLCH and PCET…DTVC. Disulfide bonds link cysteine 27–cysteine 38, cysteine 39–cysteine 52, cysteine 42–cysteine 60, cysteine 63–cysteine 77, cysteine 80–cysteine 95, cysteine 83–cysteine 103, cysteine 105–cysteine 123, and cysteine 126–cysteine 139. The stretch at 104–124 is one TNFR-Cys 3; truncated repeat; the sequence is RCRPGTQPRQDSGYKLGVDCV. The TNFR-Cys 4 repeat unit spans residues 125-165; sequence PCPPGHFSPGNNQACKPWTNCTLSGKQTRHPASDSLDAVCE. N-linked (GlcNAc...) asparagine glycosylation is present at asparagine 144. Cysteine 145 and cysteine 164 form a disulfide bridge. Residues 212–236 form a helical membrane-spanning segment; sequence AFAVLLGLGLGLLAPLTVLLALYLL. The Cytoplasmic segment spans residues 237–272; that stretch reads RKAWRLPNTPKPCWGNSFRTPIQEEHTDAHFTLAKI.

In terms of assembly, interacts with TRAF2, TRAF3 and TRAF5. In terms of tissue distribution, expressed in CD4(+) T-cells and in T-helper Th17 cells (at protein level).

It is found in the membrane. Receptor for TNFSF4/OX40L/GP34. Is a costimulatory molecule implicated in long-term T-cell immunity. This is Tumor necrosis factor receptor superfamily member 4 (Tnfrsf4) from Mus musculus (Mouse).